The primary structure comprises 286 residues: Pantothenate synthetase (286 aa).

Residue 30 to 37 coordinates ATP; sequence MGNLHDGH. H37 (proton donor) is an active-site residue. Q61 contributes to the (R)-pantoate binding site. Q61 contacts beta-alanine. Residue 149–152 coordinates ATP; the sequence is GEKD. Position 155 (Q155) interacts with (R)-pantoate. ATP-binding positions include V178 and 186-189; that span reads LSSR.

It belongs to the pantothenate synthetase family. Homodimer.

It localises to the cytoplasm. The catalysed reaction is (R)-pantoate + beta-alanine + ATP = (R)-pantothenate + AMP + diphosphate + H(+). It participates in cofactor biosynthesis; (R)-pantothenate biosynthesis; (R)-pantothenate from (R)-pantoate and beta-alanine: step 1/1. Catalyzes the condensation of pantoate with beta-alanine in an ATP-dependent reaction via a pantoyl-adenylate intermediate. This chain is Pantothenate synthetase, found in Edwardsiella ictaluri (strain 93-146).